The primary structure comprises 149 residues: MHSSRRKYNDMWTARLLIRSDQKEEKYPSFKKNAGKAINAHLIPKLSPKMNIMRSSCGRQEISQFQTKIRLFFLPHSCGVNDVTDLGGKDDELVGKRKKWKTEVRIETSMAECNGGKDFTEMTRIYLSIRKNFFQICLKTHSPQLPLGR.

This is an uncharacterized protein from Schizosaccharomyces pombe (strain 972 / ATCC 24843) (Fission yeast).